Here is a 122-residue protein sequence, read N- to C-terminus: NADH-ubiquinone oxidoreductase chain 3 (122 aa).

3 helical membrane-spanning segments follow: residues 12 to 32, 66 to 86, and 91 to 111; these read VLIF…LSYV, LVAI…PWAV, and VTIF…VGFI.

This sequence belongs to the complex I subunit 3 family.

The protein localises to the mitochondrion membrane. It carries out the reaction a ubiquinone + NADH + 5 H(+)(in) = a ubiquinol + NAD(+) + 4 H(+)(out). Core subunit of the mitochondrial membrane respiratory chain NADH dehydrogenase (Complex I) that is believed to belong to the minimal assembly required for catalysis. Complex I functions in the transfer of electrons from NADH to the respiratory chain. The immediate electron acceptor for the enzyme is believed to be ubiquinone. In Reclinomonas americana, this protein is NADH-ubiquinone oxidoreductase chain 3 (NAD3).